Reading from the N-terminus, the 269-residue chain is Expansin-B9 (269 aa).

The first 24 residues, 1 to 24 (MGSLTTNIVLAVAVVAALVGGGSC), serve as a signal peptide directing secretion. N-linked (GlcNAc...) asparagine glycosylation is present at N34. The region spanning 63 to 169 (GGACGIKNVN…RRVRCKYPGG (107 aa)) is the Expansin-like EG45 domain. Disulfide bonds link C66–C94, C97–C164, and C102–C108. The region spanning 183-264 (NYLAVLVKFV…NWMPDAIYVS (82 aa)) is the Expansin-like CBD domain.

Belongs to the expansin family. Expansin B subfamily.

The protein resides in the secreted. The protein localises to the cell wall. Its subcellular location is the membrane. Functionally, may cause loosening and extension of plant cell walls by disrupting non-covalent bonding between cellulose microfibrils and matrix glucans. No enzymatic activity has been found. May be required for rapid internodal elongation in deepwater rice during submergence. The polypeptide is Expansin-B9 (EXPB9) (Oryza sativa subsp. japonica (Rice)).